The sequence spans 474 residues: tRNA-2-methylthio-N(6)-dimethylallyladenosine synthase (474 aa).

An MTTase N-terminal domain is found at 3-120 (KKLHIKTWGC…LPEMINHVQG (118 aa)). [4Fe-4S] cluster contacts are provided by Cys12, Cys49, Cys83, Cys157, Cys161, and Cys164. Residues 143–375 (RAEGPTAFVS…QQRISQQAME (233 aa)) enclose the Radical SAM core domain. The TRAM domain occupies 378-441 (RKMVGTVQRV…ASSLRGILLR (64 aa)).

It belongs to the methylthiotransferase family. MiaB subfamily. As to quaternary structure, monomer. [4Fe-4S] cluster is required as a cofactor.

It localises to the cytoplasm. The enzyme catalyses N(6)-dimethylallyladenosine(37) in tRNA + (sulfur carrier)-SH + AH2 + 2 S-adenosyl-L-methionine = 2-methylsulfanyl-N(6)-dimethylallyladenosine(37) in tRNA + (sulfur carrier)-H + 5'-deoxyadenosine + L-methionine + A + S-adenosyl-L-homocysteine + 2 H(+). In terms of biological role, catalyzes the methylthiolation of N6-(dimethylallyl)adenosine (i(6)A), leading to the formation of 2-methylthio-N6-(dimethylallyl)adenosine (ms(2)i(6)A) at position 37 in tRNAs that read codons beginning with uridine. This is tRNA-2-methylthio-N(6)-dimethylallyladenosine synthase from Yersinia pseudotuberculosis serotype O:1b (strain IP 31758).